We begin with the raw amino-acid sequence, 665 residues long: Succinate dehydrogenase [ubiquinone] flavoprotein subunit B, mitochondrial (665 aa).

The transit peptide at 1-45 (MALLKVAPSRLLSRALQLTSTLQNCTATSIAARRNFHFTVYGRKD) directs the protein to the mitochondrion. Residues A72, A75, T94, K95, and S101 each coordinate FAD. H102 carries the post-translational modification Tele-8alpha-FAD histidine. Residues T103, G108, A224, and D278 each contribute to the FAD site. Oxaloacetate-binding residues include H299, R343, and H410. R343 (proton acceptor) is an active-site residue. Residue E443 participates in FAD binding. Residues R454 and A457 each contribute to the oxaloacetate site. FAD-binding residues include S459 and L460.

It belongs to the FAD-dependent oxidoreductase 2 family. FRD/SDH subfamily. Component of complex II composed of four subunits: a flavoprotein (FP), an iron-sulfur protein (IP), and a cytochrome b composed of a large and a small subunit. Requires FAD as cofactor.

It is found in the mitochondrion inner membrane. It catalyses the reaction a ubiquinone + succinate = a ubiquinol + fumarate. The catalysed reaction is (R)-malate + a quinone = enol-oxaloacetate + a quinol. It carries out the reaction (S)-malate + a quinone = enol-oxaloacetate + a quinol. The protein operates within carbohydrate metabolism; tricarboxylic acid cycle; fumarate from succinate (eukaryal route): step 1/1. Its activity is regulated as follows. Enol-oxaloacetate inhibits the succinate dehydrogenase activity. Flavoprotein (FP) subunit of succinate dehydrogenase (SDH) that is involved in complex II of the mitochondrial electron transport chain and is responsible for transferring electrons from succinate to ubiquinone (coenzyme Q). SDH also oxidizes malate to the non-canonical enol form of oxaloacetate, enol-oxaloacetate. Enol-oxaloacetate, which is a potent inhibitor of the succinate dehydrogenase activity, is further isomerized into keto-oxaloacetate. The protein is Succinate dehydrogenase [ubiquinone] flavoprotein subunit B, mitochondrial (sdha-b) of Xenopus laevis (African clawed frog).